Reading from the N-terminus, the 693-residue chain is Sodium-dependent dopamine transporter (693 aa).

The Cytoplasmic segment spans residues Met-1–Glu-56. Residues Ala-57 to Gly-95 form a discontinuously helical membrane-spanning segment. Na(+)-binding residues include Gly-75, Ala-77, Val-78, Asp-79, and Asn-82. Asp-79 lines the dopamine pocket. The next 2 membrane-spanning stretches (helical) occupy residues Gly-96 to Gly-127 and Ala-128 to Phe-171. 2 residues coordinate dopamine: Ser-149 and Gly-153. Over Thr-172–Pro-233 the chain is Extracellular. Cys-180 and Cys-189 are disulfide-bonded. N-linked (GlcNAc...) asparagine glycosylation is found at Asn-181, Asn-196, and Asn-202. Helical transmembrane passes span Arg-234–Trp-253 and Lys-254–Leu-284. At Pro-285–Cys-303 the chain is on the extracellular side. Residues Glu-304–Tyr-332 form a discontinuously helical membrane-spanning segment. Chloride is bound at residue Gln-314. Phe-317 provides a ligand contact to dopamine. 2 residues coordinate Na(+): Ser-318 and Asn-350. Ser-318 is a binding site for chloride. The chain crosses the membrane as a helical span at residues Asn-333 to Ser-373. Residue Ser-354 coordinates chloride. Over Val-374 to Thr-397 the chain is Extracellular. Transmembrane regions (helical) follow at residues Leu-398–His-439, Arg-440–Asn-463, and Gly-464–Tyr-496. The Na(+) site is built by Leu-415, Asp-418, and Ser-419. Ser-419 and Ala-420 together coordinate dopamine. Over Gly-497–Pro-513 the chain is Cytoplasmic. Residues Ser-514–Thr-539 traverse the membrane as a helical segment. The Extracellular segment spans residues Phe-540–Phe-550. A helical transmembrane segment spans residues Pro-551–Leu-580. The interaction with TGFB1I1 stretch occupies residues Gly-558–Lys-587. The Cytoplasmic portion of the chain corresponds to Pro-581–Tyr-693.

It belongs to the sodium:neurotransmitter symporter (SNF) (TC 2.A.22) family. SLC6A3 subfamily. Monomer. Homooligomer; disulfide-linked. Interacts with PRKCABP and TGFB1I1. Interacts (via N-terminus) with SYNGR3 (via N-terminus). Interacts with SLC18A2. Interacts with TOR1A (ATP-bound); TOR1A regulates SLC6A3 subcellular location. Interacts with alpha-synuclein/SNCA. Interacts with SEPTIN4. In terms of tissue distribution, expressed in the neurons of the substantia nigra of the brain.

The protein localises to the cell membrane. The protein resides in the cell projection. It localises to the neuron projection. Its subcellular location is the axon. The enzyme catalyses dopamine(out) + chloride(out) + Na(+)(out) = dopamine(in) + chloride(in) + Na(+)(in). It carries out the reaction (R)-noradrenaline(out) + chloride(out) + Na(+)(out) = (R)-noradrenaline(in) + chloride(in) + Na(+)(in). The catalysed reaction is dopamine(out) + chloride(out) + 2 Na(+)(out) = dopamine(in) + chloride(in) + 2 Na(+)(in). Inhibited by GBR 12909 dihydrochloride, amphetamine and cocaine. Inhibited by zinc ions. Its function is as follows. Mediates sodium- and chloride-dependent transport of dopamine. Also mediates sodium- and chloride-dependent transport of norepinephrine (also known as noradrenaline). Regulator of light-dependent retinal hyaloid vessel regression, downstream of OPN5 signaling. The chain is Sodium-dependent dopamine transporter (SLC6A3) from Bos taurus (Bovine).